Reading from the N-terminus, the 380-residue chain is Succinyl-diaminopimelate desuccinylase (380 aa).

His66 provides a ligand contact to Zn(2+). Asp68 is an active-site residue. Asp99 lines the Zn(2+) pocket. The Proton acceptor role is filled by Glu135. Residues Glu136, Glu164, and His350 each coordinate Zn(2+).

It belongs to the peptidase M20A family. DapE subfamily. As to quaternary structure, homodimer. Zn(2+) is required as a cofactor. Co(2+) serves as cofactor.

It catalyses the reaction N-succinyl-(2S,6S)-2,6-diaminopimelate + H2O = (2S,6S)-2,6-diaminopimelate + succinate. Its pathway is amino-acid biosynthesis; L-lysine biosynthesis via DAP pathway; LL-2,6-diaminopimelate from (S)-tetrahydrodipicolinate (succinylase route): step 3/3. Its function is as follows. Catalyzes the hydrolysis of N-succinyl-L,L-diaminopimelic acid (SDAP), forming succinate and LL-2,6-diaminopimelate (DAP), an intermediate involved in the bacterial biosynthesis of lysine and meso-diaminopimelic acid, an essential component of bacterial cell walls. The chain is Succinyl-diaminopimelate desuccinylase from Magnetococcus marinus (strain ATCC BAA-1437 / JCM 17883 / MC-1).